The sequence spans 274 residues: Large ribosomal subunit protein uL2 (274 aa).

Residues 223–274 (VVMNPVDHPHGGGEGRTSGGRHPVSPWGVPTKGFKTRKNKRTDKYIVRRRTK) are disordered. Positions 256 to 274 (FKTRKNKRTDKYIVRRRTK) are enriched in basic residues.

The protein belongs to the universal ribosomal protein uL2 family. In terms of assembly, part of the 50S ribosomal subunit. Forms a bridge to the 30S subunit in the 70S ribosome.

Functionally, one of the primary rRNA binding proteins. Required for association of the 30S and 50S subunits to form the 70S ribosome, for tRNA binding and peptide bond formation. It has been suggested to have peptidyltransferase activity; this is somewhat controversial. Makes several contacts with the 16S rRNA in the 70S ribosome. This Vibrio atlanticus (strain LGP32) (Vibrio splendidus (strain Mel32)) protein is Large ribosomal subunit protein uL2.